The chain runs to 332 residues: Abl interactor homolog (332 aa).

Residues 73–104 adopt a coiled-coil conformation; sequence HITSLLQLQTNEMEKLNIEIQTLTQRVRMIHD. The segment at 152–332 is disordered; the sequence is SDINQNGVPP…NDFPPPPPPM (181 aa). The segment covering 164 to 206 has biased composition (low complexity); sequence NHSNSSANLTSSSGHLAASSTSNSSTPSYQSPSYSSQPTISSG. Over residues 221–247 the composition is skewed to pro residues; sequence APPPPSLSVPAAPPPPVMNVPPPPPTS. A compositionally biased stretch (polar residues) spans 248–257; the sequence is QRPSSVNNNA. Residues 277 to 314 show a composition bias toward pro residues; it reads LPPPPSFGLPPPPTLGDDFPPPPPPPVGSYDFPPPPAR.

Belongs to the ABI family. Part of a Scar/WAVE complex containing brk1, scrA, abiA, pirA and napA. Interacts with scrA.

In terms of biological role, involved in regulation of actin and microtubule organization. Required for proper cytokinesis. In Dictyostelium discoideum (Social amoeba), this protein is Abl interactor homolog (abiA).